We begin with the raw amino-acid sequence, 365 residues long: MFEINPVKNRIQDLTERSDVLRGYLDYDAKKERLEEVNAELEQPDVWNEPERAQALGKERSSLEAIVDTLDQMSQGLEDVAGLLELAVEAEDEETFNEAVAELDGLEEKLAQLEFRRMFSGEYDSADCYLDIQAGSGGTEAQDWASMLMRMYLRWAEARGFKTEIIEESEGEVAGIKSVTIKIIGDYAYGWLRTETGVHRLVRKSPFDSGGRRHTSFSSAFVYPEVDDDIDIEINPADLRIDVYRASGAGGQHVNRTESAVRITHIPTGLVTQCQNDRSQHKNKDQAMKQMKAKLYELEMQKKNAEKQAMEDNKSDIGWGSQIRSYVLDDSRIKDLRTGVETRNTQAVLDGSLDQFIEASLKAGL.

An N5-methylglutamine modification is found at Gln252.

It belongs to the prokaryotic/mitochondrial release factor family. Methylated by PrmC. Methylation increases the termination efficiency of RF2.

It is found in the cytoplasm. Peptide chain release factor 2 directs the termination of translation in response to the peptide chain termination codons UGA and UAA. This is Peptide chain release factor 2 from Klebsiella pneumoniae (strain 342).